A 334-amino-acid chain; its full sequence is MATLKEKLIAPVAEEEAAAPNNKITVVGVGQVGMACAISILGKSLADELALVDVLEDKLKGEMMDLQHGSLFFQTPKIVADKDYSVTAGSKIVVVTAGVRQQEGESRLNLVQRNVNVFKFIIPQIVKYSPDCTIIVVSNPVDILTYVTWKLSGLPKHRVIGSGCNLDSARFRYLMSEKLGIHPSSCHGWILGEHGDSSVAVWSGVNVAGVSLQELNPEMGTDNDSENWKEVHKLVIESAYEVIKLKGYTNWAIGLSVADLIETMLKNLSRIHPVSTMVKGMYGIENEVFLSLPCILNARGLTSVINQKLKDDEVAQLKKSADTLWDIQKDLKDL.

The residue at position 2 (A2) is an N-acetylalanine. Position 7 is an N6-acetyllysine (K7). S44 bears the Phosphoserine mark. NAD(+)-binding positions include 53–58 (DVLEDK) and R100. Residue K58 is modified to N6-acetyllysine. Residue R107 participates in substrate binding. An N6-acetyllysine modification is found at K119. Residue N139 coordinates NAD(+). Substrate-binding residues include N139 and R170. The Proton acceptor role is filled by H194. A Phosphotyrosine modification is found at Y240. T249 is a substrate binding site. K329 bears the N6-acetyllysine mark.

This sequence belongs to the LDH/MDH superfamily. LDH family. In terms of assembly, homotetramer. Interacts with PTEN upstream reading frame protein MP31; the interaction leads to inhibition of mitochondrial lactate dehydrogenase activity, preventing conversion of lactate to pyruvate in mitochondria.

It is found in the cytoplasm. Its subcellular location is the mitochondrion inner membrane. The catalysed reaction is (S)-lactate + NAD(+) = pyruvate + NADH + H(+). The protein operates within fermentation; pyruvate fermentation to lactate; (S)-lactate from pyruvate: step 1/1. Functionally, interconverts simultaneously and stereospecifically pyruvate and lactate with concomitant interconversion of NADH and NAD(+). This chain is L-lactate dehydrogenase B chain (LDHB), found in Monodelphis domestica (Gray short-tailed opossum).